The following is a 417-amino-acid chain: Serine hydroxymethyltransferase (417 aa).

K54 bears the N6-acetyllysine mark. (6S)-5,6,7,8-tetrahydrofolate-binding positions include L121 and 125 to 127 (GHL). K229 carries the N6-(pyridoxal phosphate)lysine modification. Residues K250, K285, and K354 each carry the N6-acetyllysine modification. Residue 355 to 357 (SPF) coordinates (6S)-5,6,7,8-tetrahydrofolate. Position 375 is an N6-acetyllysine (K375).

It belongs to the SHMT family. In terms of assembly, homodimer. The cofactor is pyridoxal 5'-phosphate.

It localises to the cytoplasm. It carries out the reaction (6R)-5,10-methylene-5,6,7,8-tetrahydrofolate + glycine + H2O = (6S)-5,6,7,8-tetrahydrofolate + L-serine. Its pathway is one-carbon metabolism; tetrahydrofolate interconversion. It functions in the pathway amino-acid biosynthesis; glycine biosynthesis; glycine from L-serine: step 1/1. Its function is as follows. Catalyzes the reversible interconversion of serine and glycine with tetrahydrofolate (THF) serving as the one-carbon carrier. This reaction serves as the major source of one-carbon groups required for the biosynthesis of purines, thymidylate, methionine, and other important biomolecules. Also exhibits THF-independent aldolase activity toward beta-hydroxyamino acids, producing glycine and aldehydes, via a retro-aldol mechanism. This is Serine hydroxymethyltransferase from Shigella sonnei (strain Ss046).